The chain runs to 162 residues: Cyanate hydratase (162 aa).

Catalysis depends on residues R102, E105, and S128.

It belongs to the cyanase family.

It carries out the reaction cyanate + hydrogencarbonate + 3 H(+) = NH4(+) + 2 CO2. Catalyzes the reaction of cyanate with bicarbonate to produce ammonia and carbon dioxide. This Mycosarcoma maydis (Corn smut fungus) protein is Cyanate hydratase.